The following is a 446-amino-acid chain: T-box transcription factor TBX20 (446 aa).

The segment at 50-80 (SCHPNLGDLPPLETHSDFSSGGGTGSGAPLC) is disordered. Residues 108–287 (LWDKFHELGT…SNPFAKGFRD (180 aa)) constitute a DNA-binding region (T-box).

The protein localises to the nucleus. Its function is as follows. Transcriptional regulator that may play a very early role in the differentiation of the cardiac precursors. This is T-box transcription factor TBX20 (tbx20) from Danio rerio (Zebrafish).